A 406-amino-acid chain; its full sequence is COP9 signalosome complex subunit 4 (406 aa).

Alanine 2 is subject to N-acetylalanine. The residue at position 25 (lysine 25) is an N6-acetyllysine. Residues 197 to 366 form the PCI domain; that stretch reads YRRKFIEAAQ…GIVHFETREA (170 aa).

The protein belongs to the CSN4 family. Component of the CSN complex, composed of COPS1/GPS1, COPS2, COPS3, COPS4, COPS5, COPS6, COPS7 (COPS7A or COPS7B), COPS8 and COPS9. In the complex, it probably interacts directly with COPS1, COPS2, COPS3, COPS5, COPS6, COPS7 (COPS7A or COPS7B) and COPS8. Interacts with TOR1A; the interaction is direct and associates TOR1A and SNAPIN with the CSN complex. Interacts with STON2; controls STON2 neddylation levels. Interacts with ERCC6.

The protein resides in the cytoplasm. The protein localises to the nucleus. It is found in the cytoplasmic vesicle. It localises to the secretory vesicle. Its subcellular location is the synaptic vesicle. Functionally, component of the COP9 signalosome complex (CSN), a complex involved in various cellular and developmental processes. The CSN complex is an essential regulator of the ubiquitin (Ubl) conjugation pathway by mediating the deneddylation of the cullin subunits of SCF-type E3 ligase complexes, leading to decrease the Ubl ligase activity of SCF-type complexes such as SCF, CSA or DDB2. Also involved in the deneddylation of non-cullin subunits such as STON2. The complex is also involved in phosphorylation of p53/TP53, c-jun/JUN, IkappaBalpha/NFKBIA, ITPK1, IRF8/ICSBP and SNAPIN, possibly via its association with CK2 and PKD kinases. CSN-dependent phosphorylation of TP53 and JUN promotes and protects degradation by the Ubl system, respectively. The polypeptide is COP9 signalosome complex subunit 4 (Cops4) (Mus musculus (Mouse)).